The following is a 156-amino-acid chain: ATP synthase subunit b (156 aa).

Residues 7–27 (LFAQMIVFFVLWWVVARFVWP) form a helical membrane-spanning segment.

Belongs to the ATPase B chain family. F-type ATPases have 2 components, F(1) - the catalytic core - and F(0) - the membrane proton channel. F(1) has five subunits: alpha(3), beta(3), gamma(1), delta(1), epsilon(1). F(0) has three main subunits: a(1), b(2) and c(10-14). The alpha and beta chains form an alternating ring which encloses part of the gamma chain. F(1) is attached to F(0) by a central stalk formed by the gamma and epsilon chains, while a peripheral stalk is formed by the delta and b chains.

It localises to the cell membrane. Functionally, f(1)F(0) ATP synthase produces ATP from ADP in the presence of a proton or sodium gradient. F-type ATPases consist of two structural domains, F(1) containing the extramembraneous catalytic core and F(0) containing the membrane proton channel, linked together by a central stalk and a peripheral stalk. During catalysis, ATP synthesis in the catalytic domain of F(1) is coupled via a rotary mechanism of the central stalk subunits to proton translocation. Component of the F(0) channel, it forms part of the peripheral stalk, linking F(1) to F(0). The chain is ATP synthase subunit b from Polynucleobacter asymbioticus (strain DSM 18221 / CIP 109841 / QLW-P1DMWA-1) (Polynucleobacter necessarius subsp. asymbioticus).